Consider the following 126-residue polypeptide: Glycine cleavage system H protein (126 aa).

The Lipoyl-binding domain occupies 22–104 (IAYVGITDYA…YGEGWLIKMK (83 aa)). K63 carries the post-translational modification N6-lipoyllysine.

Belongs to the GcvH family. The glycine cleavage system is composed of four proteins: P, T, L and H. It depends on (R)-lipoate as a cofactor.

In terms of biological role, the glycine cleavage system catalyzes the degradation of glycine. The H protein shuttles the methylamine group of glycine from the P protein to the T protein. This chain is Glycine cleavage system H protein, found in Bacteroides thetaiotaomicron (strain ATCC 29148 / DSM 2079 / JCM 5827 / CCUG 10774 / NCTC 10582 / VPI-5482 / E50).